We begin with the raw amino-acid sequence, 970 residues long: Phosphoenolpyruvate carboxylase 1 (970 aa).

Phosphoserine is present on Ser15. Catalysis depends on residues His177, Lys606, and Arg647.

The protein belongs to the PEPCase type 1 family. As to quaternary structure, homotetramer. It depends on Mg(2+) as a cofactor.

Its subcellular location is the cytoplasm. It carries out the reaction oxaloacetate + phosphate = phosphoenolpyruvate + hydrogencarbonate. The protein operates within photosynthesis; C4 acid pathway. By light-reversible phosphorylation. In terms of biological role, through the carboxylation of phosphoenolpyruvate (PEP) it forms oxaloacetate, a four-carbon dicarboxylic acid source for the tricarboxylic acid cycle. The protein is Phosphoenolpyruvate carboxylase 1 (PEP1) of Zea mays (Maize).